Here is a 258-residue protein sequence, read N- to C-terminus: Transcription factor ORG3 (258 aa).

The bHLH domain maps to 76–128 (VKKLNHNASERDRRRKINSLFSSLRSCLPASGQSKKLSIPATVSRSLKYIPEL).

Homodimer. Expressed in vascular tissues. Detected in roots.

The protein localises to the nucleus. This chain is Transcription factor ORG3 (ORG3), found in Arabidopsis thaliana (Mouse-ear cress).